Here is a 353-residue protein sequence, read N- to C-terminus: H(2)-forming methylenetetrahydromethanopterin dehydrogenase-related protein MJ1338 (353 aa).

Belongs to the HMD family.

In Methanocaldococcus jannaschii (strain ATCC 43067 / DSM 2661 / JAL-1 / JCM 10045 / NBRC 100440) (Methanococcus jannaschii), this protein is H(2)-forming methylenetetrahydromethanopterin dehydrogenase-related protein MJ1338.